An 840-amino-acid polypeptide reads, in one-letter code: Anaphase-promoting complex subunit CDC16 (840 aa).

2 disordered regions span residues 67 to 97 (AART…TSPY) and 173 to 212 (GVVR…TTTT). TPR repeat units follow at residues 229–260 (AIER…YNIS), 263–288 (PDDA…LITR), and 296–319 (ILCR…LDVI). The disordered stretch occupies residues 329 to 350 (PSTTAANTMSNNGNNSNTSQPV). Low complexity predominate over residues 330–347 (STTAANTMSNNGNNSNTS). TPR repeat units follow at residues 357–388 (MESS…AILV), 393–416 (FEAF…LFDS), 426–454 (KEIM…EILA), 464–492 (DVVR…VLEN), 499–526 (ILPA…LAET), 531–560 (AITW…SSIL), 565–593 (AAAW…TASR), 600–628 (LPKL…AYDI), 633–665 (PLVL…VVKD), 671–703 (RTTI…VLEK), and 708–737 (SEIH…SLYL). Positions 802 to 840 (RTQKEIFDQNNKALRKGGHDSKTGSNNADDDFDADMELE) are disordered. A compositionally biased stretch (acidic residues) spans 829–840 (ADDDFDADMELE).

It belongs to the APC6/CDC16 family. In terms of assembly, the APC/C is composed of at least 13 subunits that stay tightly associated throughout the cell cycle: APC1, APC2, APC4, APC5, APC9, APC11, CDC16, CDC23, CDC26, CDC27, DOC1, MND2 and SWM1. Interacts with AMA1. Phosphorylated by CDC28, which is required for the early mitotic activity of the APC/C in its CDC20-bound form.

The protein localises to the nucleus. The protein operates within protein modification; protein ubiquitination. Its function is as follows. Component of the anaphase promoting complex/cyclosome (APC/C), a cell cycle-regulated E3 ubiquitin-protein ligase complex that controls progression through mitosis and the G1 phase of the cell cycle. The APC/C is thought to confer substrate specificity and, in the presence of ubiquitin-conjugating E2 enzymes, it catalyzes the formation of protein-ubiquitin conjugates that are subsequently degraded by the 26S proteasome. In early mitosis, the APC/C is activated by CDC20 and targets securin PDS1, the B-type cyclin CLB5, and other anaphase inhibitory proteins for proteolysis, thereby triggering the separation of sister chromatids at the metaphase-to-anaphase transition. In late mitosis and in G1, degradation of CLB5 allows activation of the APC/C by CDH1, which is needed to destroy CDC20 and the B-type cyclin CLB2 to allow exit from mitosis and creating the low CDK state necessary for cytokinesis and for reforming prereplicative complexes in G1 prior to another round of replication. The polypeptide is Anaphase-promoting complex subunit CDC16 (CDC16) (Saccharomyces cerevisiae (strain ATCC 204508 / S288c) (Baker's yeast)).